Consider the following 169-residue polypeptide: MKFIILTCLLAVALAKQESKDNSQEDFKQTVDVVIFPGQETVKNIPIPQMESVEAPIKNKCYQSIQTFKPPQALKGLYQYHMAKNPWGYTVNRAFPSTRTLQYNQKTMDLSMRAREKIVMSEIKKNIQDYVTKMKQYSKITWPRFVKSLQQYQKTMNPWSCYPYTLLQV.

The N-terminal stretch at 1–15 is a signal peptide; that stretch reads MKFIILTCLLAVALA.

This sequence belongs to the alpha-casein family. As to expression, mammary gland specific. Secreted in milk.

The protein resides in the secreted. In terms of biological role, important role in the capacity of milk to transport calcium phosphate. The protein is Alpha-S2-casein-like B (Csn1s2b) of Rattus norvegicus (Rat).